We begin with the raw amino-acid sequence, 268 residues long: NADH-quinone oxidoreductase subunit B 2 (268 aa).

[4Fe-4S] cluster contacts are provided by Cys-42, Cys-43, Cys-108, and Cys-138. The interval 237-268 (SPNKAKGVAPEIRHNDLKRPAVEVDHARDEQR) is disordered. Basic and acidic residues predominate over residues 247 to 268 (EIRHNDLKRPAVEVDHARDEQR).

The protein belongs to the complex I 20 kDa subunit family. As to quaternary structure, NDH-1 is composed of 14 different subunits. Subunits NuoB, C, D, E, F, and G constitute the peripheral sector of the complex. The cofactor is [4Fe-4S] cluster.

It is found in the cell membrane. The catalysed reaction is a quinone + NADH + 5 H(+)(in) = a quinol + NAD(+) + 4 H(+)(out). Its function is as follows. NDH-1 shuttles electrons from NADH, via FMN and iron-sulfur (Fe-S) centers, to quinones in the respiratory chain. The immediate electron acceptor for the enzyme in this species is believed to be ubiquinone. Couples the redox reaction to proton translocation (for every two electrons transferred, four hydrogen ions are translocated across the cytoplasmic membrane), and thus conserves the redox energy in a proton gradient. The protein is NADH-quinone oxidoreductase subunit B 2 of Roseiflexus castenholzii (strain DSM 13941 / HLO8).